We begin with the raw amino-acid sequence, 332 residues long: Leucine carboxyl methyltransferase 1 (332 aa).

The disordered stretch occupies residues Met1–Gly23. Residues Arg71, Gly96, Asp120, Asp169–Leu170, and Glu196 contribute to the S-adenosyl-L-methionine site.

It belongs to the methyltransferase superfamily. LCMT family.

The enzyme catalyses [phosphatase 2A protein]-C-terminal L-leucine + S-adenosyl-L-methionine = [phosphatase 2A protein]-C-terminal L-leucine methyl ester + S-adenosyl-L-homocysteine. In terms of biological role, methylates the carboxyl group of the C-terminal leucine residue of protein phosphatase 2A catalytic subunits to form alpha-leucine ester residues. This is Leucine carboxyl methyltransferase 1 (LCMT1) from Bos taurus (Bovine).